The sequence spans 813 residues: Ribonuclease R (813 aa).

Positions 260-587 (RVDLRDLPLV…LHRAIKYLLA (328 aa)) constitute an RNB domain. Position 544 is an N6-acetyllysine (K544). An S1 motif domain is found at 644 to 725 (GNVFKGVISS…DERKIDFSLI (82 aa)). The tract at residues 733–813 (NVGKTAREKA…KRAAKKKVAE (81 aa)) is disordered. 2 stretches are compositionally biased toward basic and acidic residues: residues 737–749 (TAREKAKKGDAGK) and 761–774 (VNFEPDSAFRGEKK). The segment covering 775 to 791 (TKPKAAKKDARKAKKPS) has biased composition (basic residues). Positions 792–801 (AKTQKIAAAT) are enriched in low complexity. Residues 802–813 (KAKRAAKKKVAE) show a composition bias toward basic residues.

The protein belongs to the RNR ribonuclease family. RNase R subfamily. In terms of assembly, monomer.

It localises to the cytoplasm. It carries out the reaction Exonucleolytic cleavage in the 3'- to 5'-direction to yield nucleoside 5'-phosphates.. Functionally, 3'-5' exoribonuclease that releases 5'-nucleoside monophosphates and is involved in maturation of structured RNAs. Required for the expression of virulence genes on the large plasmid of S.flexneri at the post-transcriptional level. The chain is Ribonuclease R from Shigella flexneri.